The sequence spans 146 residues: Hemoglobin subunit beta (146 aa).

Residues 2-146 (QWSDSERTII…VVMFLGKQYH (145 aa)) form the Globin domain. Residues histidine 63 and histidine 92 each coordinate heme b.

It belongs to the globin family. In terms of assembly, heterotetramer of two alpha chains and two beta chains. Red blood cells.

Involved in oxygen transport from the lung to the various peripheral tissues. The sequence is that of Hemoglobin subunit beta (hbb) from Artedidraco orianae (Barbeled plunderfish).